The following is a 368-amino-acid chain: Anhydro-N-acetylmuramic acid kinase (368 aa).

11–18 (GTSLDGID) lines the ATP pocket.

Belongs to the anhydro-N-acetylmuramic acid kinase family.

The catalysed reaction is 1,6-anhydro-N-acetyl-beta-muramate + ATP + H2O = N-acetyl-D-muramate 6-phosphate + ADP + H(+). It functions in the pathway amino-sugar metabolism; 1,6-anhydro-N-acetylmuramate degradation. Its pathway is cell wall biogenesis; peptidoglycan recycling. Functionally, catalyzes the specific phosphorylation of 1,6-anhydro-N-acetylmuramic acid (anhMurNAc) with the simultaneous cleavage of the 1,6-anhydro ring, generating MurNAc-6-P. Is required for the utilization of anhMurNAc either imported from the medium or derived from its own cell wall murein, and thus plays a role in cell wall recycling. This chain is Anhydro-N-acetylmuramic acid kinase, found in Sulfurimonas denitrificans (strain ATCC 33889 / DSM 1251) (Thiomicrospira denitrificans (strain ATCC 33889 / DSM 1251)).